Reading from the N-terminus, the 345-residue chain is Viral Fc-gamma receptor-like protein UL119 (345 aa).

The N-terminal stretch at Met1–Ser23 is a signal peptide. Positions Ser23 to Ile43 are disordered. At Ser24–Arg293 the chain is on the virion surface side. 12 N-linked (GlcNAc...) asparagine; by host glycosylation sites follow: Asn34, Asn48, Asn95, Asn104, Asn148, Asn179, Asn198, Asn217, Asn225, Asn241, Asn244, and Asn260. In terms of domain architecture, Ig-like V-type spans Gln91–Tyr190. A helical membrane pass occupies residues Leu294–Thr314. At Tyr315–Trp345 the chain is on the intravirion side.

Its subcellular location is the virion membrane. Its function is as follows. Serves as a receptor for the Fc part of human IgG. May thus be involved in interfering with host Ig-mediated immune responses. This chain is Viral Fc-gamma receptor-like protein UL119 (UL119/UL118), found in Homo sapiens (Human).